A 316-amino-acid chain; its full sequence is Acetyl-coenzyme A carboxylase carboxyl transferase subunit alpha (316 aa).

Positions 24–291 constitute a CoA carboxyltransferase C-terminal domain; the sequence is NIKDKADIVD…KEALIQQLNE (268 aa).

The protein belongs to the AccA family. In terms of assembly, acetyl-CoA carboxylase is a heterohexamer composed of biotin carboxyl carrier protein (AccB), biotin carboxylase (AccC) and two subunits each of ACCase subunit alpha (AccA) and ACCase subunit beta (AccD).

Its subcellular location is the cytoplasm. The catalysed reaction is N(6)-carboxybiotinyl-L-lysyl-[protein] + acetyl-CoA = N(6)-biotinyl-L-lysyl-[protein] + malonyl-CoA. The protein operates within lipid metabolism; malonyl-CoA biosynthesis; malonyl-CoA from acetyl-CoA: step 1/1. Its function is as follows. Component of the acetyl coenzyme A carboxylase (ACC) complex. First, biotin carboxylase catalyzes the carboxylation of biotin on its carrier protein (BCCP) and then the CO(2) group is transferred by the carboxyltransferase to acetyl-CoA to form malonyl-CoA. This is Acetyl-coenzyme A carboxylase carboxyl transferase subunit alpha from Ruthia magnifica subsp. Calyptogena magnifica.